The primary structure comprises 436 residues: Trigger factor (436 aa).

Residues 163–248 (GDRVTVDFEG…VKKIEAAHLP (86 aa)) enclose the PPIase FKBP-type domain.

Belongs to the FKBP-type PPIase family. Tig subfamily.

It localises to the cytoplasm. It catalyses the reaction [protein]-peptidylproline (omega=180) = [protein]-peptidylproline (omega=0). Involved in protein export. Acts as a chaperone by maintaining the newly synthesized protein in an open conformation. Functions as a peptidyl-prolyl cis-trans isomerase. The protein is Trigger factor of Paracidovorax citrulli (strain AAC00-1) (Acidovorax citrulli).